We begin with the raw amino-acid sequence, 115 residues long: Vespryn (115 aa).

The signal sequence occupies residues 1-15 (MTWLLLCLLAQYENG). The region spanning 22-115 (SSSAKPYKTS…VKRKDHLRLT (94 aa)) is the B30.2/SPRY domain.

The protein belongs to the ohanin/vespryn family. As to expression, expressed by the venom gland.

Its subcellular location is the secreted. Functionally, neurotoxin that produces dose-dependent hypolocomotion and hyperalgesia in mice. May directly act on the central nervous system, as it is 6500-fold more potent when administered intracerebroventricularly than intraperitoneal. This Pogona barbata (Bearded dragon) protein is Vespryn.